Consider the following 171-residue polypeptide: Peptide deformylase (171 aa).

C94 and H136 together coordinate Fe cation. Residue E137 is part of the active site. H140 provides a ligand contact to Fe cation.

The protein belongs to the polypeptide deformylase family. Fe(2+) is required as a cofactor.

It carries out the reaction N-terminal N-formyl-L-methionyl-[peptide] + H2O = N-terminal L-methionyl-[peptide] + formate. In terms of biological role, removes the formyl group from the N-terminal Met of newly synthesized proteins. Requires at least a dipeptide for an efficient rate of reaction. N-terminal L-methionine is a prerequisite for activity but the enzyme has broad specificity at other positions. This Afipia carboxidovorans (strain ATCC 49405 / DSM 1227 / KCTC 32145 / OM5) (Oligotropha carboxidovorans) protein is Peptide deformylase.